The chain runs to 304 residues: Protein Largen (304 aa).

Residues 1–22 (MSAKSKGNPSSSSAAEGPPAAS) show a composition bias toward low complexity. Disordered stretches follow at residues 1–27 (MSAKSKGNPSSSSAAEGPPAASKTKVK), 66–109 (QLED…PPAH), 114–133 (LTVLRKPNPPPPPPRLTPVR), and 236–304 (EPVH…TTTV). The stretch at 33–70 (IVEDLELVLGDLKDVAKELKEVVDQIDTLTSDLQLEDE) forms a coiled coil. Over residues 77 to 91 (TDTLNSSSSGTTASS) the composition is skewed to low complexity. Composition is skewed to pro residues over residues 120–129 (PNPPPPPPRL) and 275–289 (FPPPTPATVPPPAAP).

Functionally, regulator of cell size that promotes cell size increase independently of mTOR and Hippo signaling pathways. Acts by stimulating the translation of specific mRNAs, including those encoding proteins affecting mitochondrial functions. Increases mitochondrial mass and respiration. The chain is Protein Largen (Prr16) from Mus musculus (Mouse).